We begin with the raw amino-acid sequence, 122 residues long: Large ribosomal subunit protein uL22c (122 aa).

This sequence belongs to the universal ribosomal protein uL22 family. In terms of assembly, part of the 50S ribosomal subunit.

The protein localises to the plastid. The protein resides in the chloroplast. Its function is as follows. This protein binds specifically to 23S rRNA. Functionally, the globular domain of the protein is located near the polypeptide exit tunnel on the outside of the subunit, while an extended beta-hairpin is found that lines the wall of the exit tunnel in the center of the 70S ribosome. The polypeptide is Large ribosomal subunit protein uL22c (rpl22) (Adiantum capillus-veneris (Maidenhair fern)).